A 308-amino-acid polypeptide reads, in one-letter code: Ribonuclease HIII (308 aa).

The region spanning 92-308 (DNHIGSDEAG…ANTQKAQKLL (217 aa)) is the RNase H type-2 domain. A divalent metal cation contacts are provided by D98, E99, and D204.

The protein belongs to the RNase HII family. RnhC subfamily. Mn(2+) is required as a cofactor. Requires Mg(2+) as cofactor.

It localises to the cytoplasm. The catalysed reaction is Endonucleolytic cleavage to 5'-phosphomonoester.. Functionally, endonuclease that specifically degrades the RNA of RNA-DNA hybrids. The protein is Ribonuclease HIII of Oceanobacillus iheyensis (strain DSM 14371 / CIP 107618 / JCM 11309 / KCTC 3954 / HTE831).